The sequence spans 2415 residues: Spectrin alpha chain (2415 aa).

Spectrin repeat units follow at residues 48 to 150 (RFQY…KLQQ), 154 to 254 (LVQF…QEKL), 258 to 362 (HEIQ…KLDE), 366 to 464 (LHRF…DRRI), 471 to 574 (DLQL…LLED), 577 to 679 (RYQQ…KLNE), 683 to 784 (QQQF…QHLL), 788 to 890 (QVQQ…QDLD), and 894 to 963 (QAHQ…RQQE). The SH3 domain maps to 970–1029 (TGKECVVALYDYTEKSPREVSMKKGDVLTLLNSNNKDWWKVEVNDRQGFVPAAYIKKIDA). A phosphoserine mark is found at S1032 and S1034. Spectrin repeat units lie at residues 1079–1177 (VREA…ASQL), 1181–1284 (HEVQ…EKLL), 1287–1391 (YDLQ…QLEQ), 1394–1496 (DLQL…SRLG), 1500–1604 (TLQQ…KLKE), 1608–1710 (QRTY…RLNE), 1714–1816 (LHQF…KLDE), 1820–1921 (YQQF…GALL), 1926–2028 (YLQF…DRLL), 2040–2141 (LYLT…DGEL), and 2154–2252 (LRKE…NLEQ). EF-hand domains follow at residues 2265-2300 (DSLK…LGYD) and 2308-2343 (QPDP…KETE). Residues D2278, D2280, S2282, K2284, E2289, D2321, N2323, D2325, Y2327, and E2332 each coordinate Ca(2+).

It belongs to the spectrin family. As to quaternary structure, native spectrin molecule is a tetramer composed of two antiparallel heterodimers joined head to head so that each end of the native molecule includes the C-terminus of the alpha subunit and the N-terminus of the beta subunit. Interacts with calmodulin in a calcium-dependent manner, interacts with F-actin and also interacts with Lva. Interacts with Ten-m. A substantial pool of maternal protein in the egg undergoes dynamic changes in distribution early in embryogenesis. In gastrulated embryo, the highest level of protein is found in the respiratory tract cells and the lowest in parts of the forming gut.

The protein localises to the cytoplasm. The protein resides in the cytoskeleton. It is found in the golgi apparatus. It localises to the cell projection. Its subcellular location is the cilium. The protein localises to the flagellum. Spectrin is the major constituent of the cytoskeletal network underlying the erythrocyte plasma membrane. It associates with band 4.1 and actin to form the cytoskeletal superstructure of the erythrocyte plasma membrane. Essential for larval survival and development. Stabilizes cell to cell interactions that are critical for the maintenance of cell shape and subcellular organization within embryonic tissues. Lva and spectrin may form a Golgi-based scaffold that mediates interaction of Golgi bodies with microtubules and facilitates Golgi-derived membrane secretion required for the formation of furrows during cellularization. The polypeptide is Spectrin alpha chain (alpha-Spec) (Drosophila melanogaster (Fruit fly)).